The chain runs to 334 residues: Ferric enterobactin transport system permease protein FepD (334 aa).

The Periplasmic segment spans residues Met1 to Arg9. Residues Ala10 to Ile30 traverse the membrane as a helical segment. Residues Gly31 to Arg63 lie on the Cytoplasmic side of the membrane. A helical membrane pass occupies residues Thr64–Leu84. The Periplasmic portion of the chain corresponds to Thr85–Pro92. The chain crosses the membrane as a helical span at residues Gly93–Gly113. Residues Tyr114 to Gln120 are Cytoplasmic-facing. Residues Leu121–Gln141 form a helical membrane-spanning segment. Over Gly142–Leu151 the chain is Periplasmic. The helical transmembrane segment at Thr152 to Leu172 threads the bilayer. The Cytoplasmic segment spans residues Asn173–Asn192. The chain crosses the membrane as a helical span at residues Leu193–Leu213. Topologically, residues Ser214–Gly241 are periplasmic. The chain crosses the membrane as a helical span at residues Leu242–Ile262. Residues Gly263–Arg279 lie on the Cytoplasmic side of the membrane. The helical transmembrane segment at Trp280–Gly300 threads the bilayer. Residues Arg301–Pro305 lie on the Periplasmic side of the membrane. Residues Gly306–Val326 traverse the membrane as a helical segment. Residues Arg327–Ala334 lie on the Cytoplasmic side of the membrane.

This sequence belongs to the binding-protein-dependent transport system permease family. FecCD subfamily. In terms of assembly, the complex is composed of two ATP-binding proteins (FepC), two transmembrane proteins (FepD and FepG) and a solute-binding protein (FepB).

Its subcellular location is the cell inner membrane. Part of the ABC transporter complex FepBDGC involved in ferric enterobactin uptake. Responsible for the translocation of the substrate across the membrane. In Escherichia coli (strain K12), this protein is Ferric enterobactin transport system permease protein FepD (fepD).